The following is a 191-amino-acid chain: Protein GrpE (191 aa).

Basic and acidic residues-rich tracts occupy residues 1-19 (MKDE…EPES) and 29-42 (QQGE…EKEC). Residues 1 to 42 (MKDEHNQEHDHLSQKEPESYQKACACKEQQGEEKQEASEKEC) are disordered.

This sequence belongs to the GrpE family. As to quaternary structure, homodimer.

Its subcellular location is the cytoplasm. In terms of biological role, participates actively in the response to hyperosmotic and heat shock by preventing the aggregation of stress-denatured proteins, in association with DnaK and GrpE. It is the nucleotide exchange factor for DnaK and may function as a thermosensor. Unfolded proteins bind initially to DnaJ; upon interaction with the DnaJ-bound protein, DnaK hydrolyzes its bound ATP, resulting in the formation of a stable complex. GrpE releases ADP from DnaK; ATP binding to DnaK triggers the release of the substrate protein, thus completing the reaction cycle. Several rounds of ATP-dependent interactions between DnaJ, DnaK and GrpE are required for fully efficient folding. The sequence is that of Protein GrpE from Helicobacter pylori (strain HPAG1).